Reading from the N-terminus, the 372-residue chain is DNA replication and repair protein RecF (372 aa).

30–37 (GENAQGKT) is a binding site for ATP.

This sequence belongs to the RecF family.

The protein resides in the cytoplasm. The RecF protein is involved in DNA metabolism; it is required for DNA replication and normal SOS inducibility. RecF binds preferentially to single-stranded, linear DNA. It also seems to bind ATP. The sequence is that of DNA replication and repair protein RecF from Geobacillus thermodenitrificans (strain NG80-2).